The following is a 549-amino-acid chain: Myotubularin-related protein 9 (549 aa).

M1 carries the post-translational modification N-acetylmethionine. Positions 4–99 (AELIKTPRVD…LNIASSIEAL (96 aa)) constitute a GRAM domain. A Myotubularin phosphatase domain is found at 123 to 498 (GWHSFLPEQE…QSLQLWEGIF (376 aa)). The stretch at 508–542 (LDEAYEEMVNIIEYNKELQAKVNLLRRQLAELETE) forms a coiled coil. At S548 the chain carries Phosphoserine.

It belongs to the protein-tyrosine phosphatase family. Non-receptor class myotubularin subfamily. As to quaternary structure, homodimer. Heterodimer (via C-terminus) with lipid phosphatase MTMR6 (via C-terminus). Heterodimer (via coiled coil domain) with lipid phosphatase MTMR7 (via C-terminus). Heterodimer with lipid phosphatase MTMR8.

It localises to the cytoplasm. The protein resides in the cell projection. Its subcellular location is the ruffle membrane. It is found in the perinuclear region. The protein localises to the endoplasmic reticulum. Acts as an adapter for myotubularin-related phosphatases. Increases lipid phosphatase MTMR6 catalytic activity, specifically towards phosphatidylinositol 3,5-bisphosphate, and MTMR6 binding affinity for phosphorylated phosphatidylinositols. Positively regulates lipid phosphatase MTMR7 catalytic activity. Increases MTMR8 catalytic activity towards phosphatidylinositol 3-phosphate. The formation of the MTMR6-MTMR9 complex, stabilizes both MTMR6 and MTMR9 protein levels. Stabilizes MTMR8 protein levels. Plays a role in the late stages of macropinocytosis possibly by regulating MTMR6-mediated dephosphorylation of phosphatidylinositol 3-phosphate in membrane ruffles. Negatively regulates autophagy, in part via its association with MTMR8. Negatively regulates DNA damage-induced apoptosis, in part via its association with MTMR6. Does not bind mono-, di- and tri-phosphorylated phosphatidylinositols, phosphatidic acid and phosphatidylserine. This is Myotubularin-related protein 9 (MTMR9) from Bos taurus (Bovine).